Here is a 107-residue protein sequence, read N- to C-terminus: High mobility group protein HMG-I/HMG-Y (107 aa).

Positions 1–107 are disordered; the sequence is MSESSSKSSQ…ISQESSEEEQ (107 aa). Ser-2 carries the N-acetylserine modification. Lys-7 is modified (N6-acetyllysine). The residue at position 8 (Ser-8) is an ADP-ribosylserine. Ser-9 is modified (ADP-ribosylserine; alternate). At Ser-9 the chain carries Phosphoserine; alternate. Lys-15 carries the N6-acetyllysine; alternate modification. Lys-15 is covalently cross-linked (Glycyl lysine isopeptide (Lys-Gly) (interchain with G-Cter in SUMO2); alternate). Residues 15 to 24 are compositionally biased toward basic and acidic residues; sequence KQEKDGTEKR. The a.T hook 1 DNA-binding region spans 21–31; the sequence is TEKRGRGRPRK. Arg-26 bears the Asymmetric dimethylarginine; alternate mark. Residue Arg-26 is modified to Omega-N-methylarginine; alternate. Arg-26 bears the Symmetric dimethylarginine; alternate mark. Ser-36 carries the post-translational modification Phosphoserine; by HIPK2 and CDC2. Residue Thr-39 is modified to Phosphothreonine. Residues Ser-44 and Ser-49 each carry the phosphoserine modification. At Thr-53 the chain carries Phosphothreonine; by HIPK2 and CDC2. DNA-binding regions (a.T hook) lie at residues 53 to 63 and 78 to 89; these read TPKRPRGRPKG and APGRKPRGRPKK. The interaction with HIPK2 stretch occupies residues 53-77; that stretch reads TPKRPRGRPKGSKNKGAAKTRKATT. A compositionally biased stretch (basic residues) spans 55-74; the sequence is KRPRGRPKGSKNKGAAKTRK. 2 positions are modified to asymmetric dimethylarginine; by PRMT6; alternate: Arg-58 and Arg-60. Omega-N-methylarginine; by PRMT6; alternate is present on residues Arg-58 and Arg-60. Acidic residues predominate over residues 93–107; the sequence is EEEEGISQESSEEEQ. Phosphoserine occurs at positions 99, 102, and 103.

Belongs to the HMGA family. Interacts with HIPK2. Post-translationally, isoforms HMG-I and HMG-Y can be phosphorylated by HIPK2. Phosphorylation may modulate DNA-binding affinity. Methylation at Arg-58 is mutually exclusive with methylation at Arg-60.

The protein resides in the nucleus. It localises to the chromosome. Its function is as follows. HMG-I/Y bind preferentially to the minor groove of A+T rich regions in double-stranded DNA. It is suggested that these proteins could function in nucleosome phasing and in the 3'-end processing of mRNA transcripts. They are also involved in the transcription regulation of genes containing, or in close proximity to A+T-rich regions. This chain is High mobility group protein HMG-I/HMG-Y (HMGA1), found in Cricetulus griseus (Chinese hamster).